The sequence spans 320 residues: GDSL esterase/lipase At3g43570 (320 aa).

Positions 1–19 (MKIQIIWLTLVLIVVEANA) are cleaved as a signal peptide. Asn-25 is a glycosylation site (N-linked (GlcNAc...) asparagine). The active-site Nucleophile is the Ser-37. N-linked (GlcNAc...) asparagine glycosylation is present at Asn-287. Catalysis depends on residues Asp-295 and His-298.

Belongs to the 'GDSL' lipolytic enzyme family.

It localises to the secreted. This Arabidopsis thaliana (Mouse-ear cress) protein is GDSL esterase/lipase At3g43570.